The sequence spans 119 residues: Large ribosomal subunit protein bL20 (119 aa).

Belongs to the bacterial ribosomal protein bL20 family.

Its function is as follows. Binds directly to 23S ribosomal RNA and is necessary for the in vitro assembly process of the 50S ribosomal subunit. It is not involved in the protein synthesizing functions of that subunit. The protein is Large ribosomal subunit protein bL20 of Afipia carboxidovorans (strain ATCC 49405 / DSM 1227 / KCTC 32145 / OM5) (Oligotropha carboxidovorans).